The chain runs to 121 residues: Mitochondrial intermembrane space cysteine motif-containing protein MIX14 (121 aa).

CHCH domains are found at residues 14 to 56 (VANC…VPSV) and 60 to 105 (MSEC…VKNK). 4 short sequence motifs (cx9C motif) span residues 17–27 (CPQEFLQYHKC), 38–48 (CKDGRMILSTC), 63–73 (CSEPMKKYDQC), and 87–97 (CLGFLQDLRKC). Disulfide bonds link Cys17–Cys48, Cys27–Cys38, Cys63–Cys97, and Cys73–Cys87.

The protein localises to the mitochondrion intermembrane space. This chain is Mitochondrial intermembrane space cysteine motif-containing protein MIX14 (MIX14), found in Saccharomyces cerevisiae (strain ATCC 204508 / S288c) (Baker's yeast).